Reading from the N-terminus, the 1297-residue chain is Insulin receptor-related protein (1297 aa).

The signal sequence occupies residues 1-26; the sequence is MAVPSLWPWGACLPVIFLSLGFGLDT. N47 carries N-linked (GlcNAc...) asparagine glycosylation. Intrachain disulfides connect C214–C222, C216–C228, C229–C237, C233–C246, C249–C258, C262–C274, C280–C300, C304–C317, and C320–C324. An N-linked (GlcNAc...) asparagine glycan is attached at N311. N-linked (GlcNAc...) asparagine glycans are attached at residues N411, N492, N528, N616, and N634. Fibronectin type-III domains lie at 483–603 and 607–707; these read QTRT…TLPA and VPQD…AQEA. An intrachain disulfide couples C657 to C864. 2 disordered regions span residues 666–687 and 732–758; these read SNNDPRFDGEDGDPEAEMESDC and SINKSPQRDSGRHRRAAGPLRLGGNSS. Residues 675–685 are compositionally biased toward acidic residues; sequence EDGDPEAEMES. Topologically, residues 747 to 921 are extracellular; that stretch reads AAGPLRLGGN…PEEEDAGGLH (175 aa). N-linked (GlcNAc...) asparagine glycosylation is found at N756, N885, and N898. Residues 818–913 form the Fibronectin type-III 3 domain; the sequence is IPGKVAWEAS…SVAFYILGPE (96 aa). Residues 922–943 form a helical membrane-spanning segment; that stretch reads VLLTATPVGLTLLIVLAALGFF. At 944-1297 the chain is on the cytoplasmic side; sequence YGKKRNRTLY…CSPQNGGPGH (354 aa). The Protein kinase domain occupies 979-1254; the sequence is ISIIRELGQG…SIQEELRPSF (276 aa). ATP is bound by residues 985–993 and K1013; that span reads LGQGSFGMV. D1115 (proton acceptor) is an active-site residue. A phosphotyrosine; by autocatalysis mark is found at Y1145 and Y1146. Residues 1267–1297 form a disordered region; it reads GARGSLPTTDAEPDSSPTPRDCSPQNGGPGH. Residues 1281-1297 are compositionally biased toward polar residues; sequence SSPTPRDCSPQNGGPGH.

Belongs to the protein kinase superfamily. Tyr protein kinase family. Insulin receptor subfamily. In terms of assembly, probable tetramer of 2 alpha and 2 beta chains linked by disulfide bonds. The alpha chains contribute to the formation of the ligand-binding domain, while the beta chains carry the kinase domain. In terms of processing, autophosphorylated on tyrosine residues between pH 7.9 and pH 10.5.

Its subcellular location is the membrane. The enzyme catalyses L-tyrosyl-[protein] + ATP = O-phospho-L-tyrosyl-[protein] + ADP + H(+). Receptor with tyrosine-protein kinase activity. Functions as a pH sensing receptor which is activated by increased extracellular pH. Activates an intracellular signaling pathway that involves IRS1 and AKT1/PKB. The polypeptide is Insulin receptor-related protein (INSRR) (Homo sapiens (Human)).